Consider the following 244-residue polypeptide: Salivary gland SP38-40.A protein (244 aa).

Positions 1 to 21 are cleaved as a signal peptide; sequence MRIKFLVVLAVICLFAHYASA. Disordered stretches follow at residues 23–91, 137–169, and 206–244; these read GMGG…EKKQ, PPPG…LRKE, and VQGK…DAKK. Basic and acidic residues-rich tracts occupy residues 26–86 and 157–169; these read GDKK…EVKK and PPKE…LRKE. Repeat copies occupy residues 29–34 and 35–40. Residues 29-47 form a 3 X 6 AA approximate tandem repeats of K-P-K-D-A-P region; sequence KPKDAPKPKDAPKPKEVKP. The stretch at 41-47 is one 1-3; approximate repeat; that stretch reads KPKEVKP. A run of 2 repeats spans residues 156–159 and 161–164. Residues 156 to 168 are 3 X 4 AA approximate tandem repeats of K-P-P-K; the sequence is KPPKEKPPKKLRK. A 2-3; approximate repeat occupies 165–168; the sequence is KLRK. Over residues 209-224 the composition is skewed to basic residues; the sequence is KQKKGAKKAKGGKKAA. Repeat copies occupy residues 225 to 228, 229 to 232, and 233 to 236. Positions 225–240 are 4 X 4 AA approximate tandem repeats of P-K-[PQ]-[GA]; that stretch reads PKPGPKPGPKQADKPK. Positions 235–244 are enriched in basic and acidic residues; sequence QADKPKDAKK. The stretch at 237–240 is one 3-4; approximate repeat; that stretch reads DKPK.

Salivary gland.

It localises to the secreted. Used by the larvae to construct a supramolecular structure, the larval tube. The polypeptide is Salivary gland SP38-40.A protein (SP38-40.A) (Chironomus tentans (Midge)).